Here is a 548-residue protein sequence, read N- to C-terminus: Chaperonin GroEL (548 aa).

ATP is bound by residues 29–32 (TLGP), lysine 50, 86–90 (DGTTT), glycine 416, and aspartate 497.

This sequence belongs to the chaperonin (HSP60) family. In terms of assembly, forms a cylinder of 14 subunits composed of two heptameric rings stacked back-to-back. Interacts with the co-chaperonin GroES.

Its subcellular location is the cytoplasm. The catalysed reaction is ATP + H2O + a folded polypeptide = ADP + phosphate + an unfolded polypeptide.. Its function is as follows. Together with its co-chaperonin GroES, plays an essential role in assisting protein folding. The GroEL-GroES system forms a nano-cage that allows encapsulation of the non-native substrate proteins and provides a physical environment optimized to promote and accelerate protein folding. This is Chaperonin GroEL from Neorickettsia sennetsu (strain ATCC VR-367 / Miyayama) (Ehrlichia sennetsu).